Here is a 520-residue protein sequence, read N- to C-terminus: Endosomal/lysosomal proton channel TMEM175 (520 aa).

The segment at 1 to 27 (MGENDESEIIEHHDDEEMEKRRPPRTH) is disordered. Residues 1–49 (MGENDESEIIEHHDDEEMEKRRPPRTHAQSFLESVASSVKEGHSSTQSS) lie on the Cytoplasmic side of the membrane. A compositionally biased stretch (basic and acidic residues) spans 9-21 (IIEHHDDEEMEKR). Residues 50-72 (HRLLAYSDALISIIATVMILPVA) traverse the membrane as a helical segment. The short motif at 51–57 (RLLAYSD) is the RxxxFSD motif 1 element. Topologically, residues 73 to 93 (HTKIQEDEELKQSIQALLTTK) are lumenal. The segment at 74–79 (TKIQED) is short helix H1-1. The interval 81–87 (ELKQSIQ) is short helix H2-1. Residues 94–116 (IAVYLMTFLIVTVAWAAHIRLFQ) traverse the membrane as a helical segment. Residues 117–122 (VIERID) lie on the Cytoplasmic side of the membrane. Residues 123-144 (DTLALLNLACMMLITFLPYTFS) form a helical membrane-spanning segment. Residues 145–154 (LMATFPNNIL) lie on the Lumenal side of the membrane. The helical transmembrane segment at 155-176 (GILLFCACVMVIGLIQALIVLY) threads the bilayer. At 177 to 200 (GFSHPFLLNDQIQMSENQAYYKQH) the chain is on the cytoplasmic side. 2 consecutive transmembrane segments (helical) span residues 201 to 221 (ILKVIMRVPIMCLFASIFSFI) and 222 to 242 (FFQLSYVLLAIVIFLPYISQC). The Cytoplasmic segment spans residues 243 to 274 (LKWIRSKAIGGQTDESPDSMPFYTYHPSEPLS). Residues 275–299 (KERVEAFSDGVFAIVATLLILDICE) traverse the membrane as a helical segment. A RxxxFSD motif 2 motif is present at residues 277 to 283 (RVEAFSD). Residues 300–326 (GNVPDPSVVKKKFDNSLIAALQEYGPE) lie on the Lumenal side of the membrane. Residues 305 to 313 (PSVVKKKFD) are short helix H1-2. Positions 315–321 (SLIAALQ) are short helix H2-2. A helical membrane pass occupies residues 327 to 349 (YLAYFGSFVTVGLLWFVHHSLFL). Residues 350–355 (HVTKAT) are Cytoplasmic-facing. The helical transmembrane segment at 356–377 (RLMGLFNTFSLAFVGGLPLAYQ) threads the bilayer. Residues 378–392 (LTHESPRGSRNELEA) lie on the Lumenal side of the membrane. A helical transmembrane segment spans residues 393–413 (VQISCVIIFFASLFQLAIWVT). The Cytoplasmic segment spans residues 414-433 (ALFTERETLHPYVRYGGREH). Residues 434–457 (TFMLAKLSLYPCVALGTFFITCIL) traverse the membrane as a helical segment. The Lumenal portion of the chain corresponds to 458-459 (SR). The helical transmembrane segment at 460–486 (FSAPIFHMMEICIPFAFLLLRLLVRVA) threads the bilayer. The Cytoplasmic portion of the chain corresponds to 487 to 520 (LALLRWLFCSARNDLERIPVEEEESRLPINDIVT).

This sequence belongs to the TMEM175 family. As to quaternary structure, homodimer.

The protein localises to the endosome membrane. It is found in the lysosome membrane. It carries out the reaction H(+)(in) = H(+)(out). It catalyses the reaction K(+)(in) = K(+)(out). Its activity is regulated as follows. Active at low pH (under pH 4.6): proton channel activity is activated by luminal side protons. Polyunsaturated fatty acids, such as arachidonic acid, also activate the channel activity. In terms of biological role, proton-activated proton channel that catalyzes proton efflux from endosomes and lysosomes to maintain a steady-state pH. Activated at low pH (under pH 4.6) by luminal side protons: selectively mediates lysosomal proton release from lysosomes, eliciting a proton leak that balances V-ATPase activity to maintain pH homeostasis. Regulation of lumenal pH stability is required for autophagosome-lysosome fusion. Also acts as a potassium channel at higher pH, regulating potassium conductance in endosomes and lysosomes. This is Endosomal/lysosomal proton channel TMEM175 from Danio rerio (Zebrafish).